Consider the following 192-residue polypeptide: Ion-translocating oxidoreductase complex subunit B (192 aa).

Residues 1-26 (MEMIVIAVVALTLLALLFGMLLGYAS) form a hydrophobic region. Residues 32 to 91 (EEDPVVDQVDELLPQSQCGQCGYPGCRPYAEAVANNGEQINRCVPGGEPVMQKIATLLNV) form the 4Fe-4S domain. [4Fe-4S] cluster contacts are provided by cysteine 49, cysteine 52, cysteine 57, cysteine 74, cysteine 117, cysteine 120, cysteine 123, cysteine 127, cysteine 147, cysteine 150, cysteine 153, and cysteine 157. 2 consecutive 4Fe-4S ferredoxin-type domains span residues 108–137 (MLAV…GATR) and 138–167 (AMHT…LRPA).

Belongs to the 4Fe4S bacterial-type ferredoxin family. RnfB subfamily. In terms of assembly, the complex is composed of six subunits: RnfA, RnfB, RnfC, RnfD, RnfE and RnfG. It depends on [4Fe-4S] cluster as a cofactor.

Its subcellular location is the cell inner membrane. Functionally, part of a membrane-bound complex that couples electron transfer with translocation of ions across the membrane. This Cronobacter sakazakii (strain ATCC BAA-894) (Enterobacter sakazakii) protein is Ion-translocating oxidoreductase complex subunit B.